Reading from the N-terminus, the 73-residue chain is U3-agatoxin-Ao1e (73 aa).

The signal sequence occupies residues 1–20 (MRTIISLLLLSAMVFAVIEA). Positions 21–34 (ISLEEGLQLFEGER) are excised as a propeptide. 4 disulfide bridges follow: Cys36-Cys52, Cys43-Cys57, Cys51-Cys67, and Cys59-Cys65. Asn71 bears the Asparagine amide mark.

It belongs to the neurotoxin 07 (Beta/delta-agtx) family. 03 (aga-4) subfamily. Aga sub-subfamily. Expressed by the venom gland.

The protein resides in the secreted. Its function is as follows. Insecticidal neurotoxin that induces an irreversible spastic paralysis when injected into insects. Modifies presynaptic voltage-gated sodium channels (Nav), causing them to open at the normal resting potential of the nerve. This leads to spontaneous release of neurotransmitter and repetitive action potentials in motor neurons. The protein is U3-agatoxin-Ao1e of Agelena orientalis (Funnel-web spider).